Here is a 395-residue protein sequence, read N- to C-terminus: Ribosomal RNA small subunit methyltransferase H (395 aa).

Residues 101–103, Asp120, Tyr147, Asp171, and Gln178 contribute to the S-adenosyl-L-methionine site; that span reads GGH.

Belongs to the methyltransferase superfamily. RsmH family.

The protein resides in the cytoplasm. It catalyses the reaction cytidine(1402) in 16S rRNA + S-adenosyl-L-methionine = N(4)-methylcytidine(1402) in 16S rRNA + S-adenosyl-L-homocysteine + H(+). In terms of biological role, specifically methylates the N4 position of cytidine in position 1402 (C1402) of 16S rRNA. In Mycobacterium ulcerans (strain Agy99), this protein is Ribosomal RNA small subunit methyltransferase H.